Consider the following 278-residue polypeptide: Orotidine 5'-phosphate decarboxylase (278 aa).

Residues D40, 62–64 (KTH), 93–102 (DRKFIDIGNT), Y228, and R246 each bind substrate. K95 acts as the Proton donor in catalysis.

The protein belongs to the OMP decarboxylase family.

The catalysed reaction is orotidine 5'-phosphate + H(+) = UMP + CO2. It participates in pyrimidine metabolism; UMP biosynthesis via de novo pathway; UMP from orotate: step 2/2. This Passalora fulva (Tomato leaf mold) protein is Orotidine 5'-phosphate decarboxylase (PYR1).